Consider the following 325-residue polypeptide: NADH-quinone oxidoreductase subunit H (325 aa).

Helical transmembrane passes span 11–31 (ILIS…CGAF), 81–101 (AIFT…FAIV), 114–134 (IGIL…LFAG), 154–174 (LSYE…AGSF), 186–206 (VWNV…GVAV), 237–257 (FFVG…TLFF), 265–285 (LPPF…FILI), and 304–324 (VCLP…LYNA).

It belongs to the complex I subunit 1 family. As to quaternary structure, NDH-1 is composed of 13 different subunits. Subunits NuoA, H, J, K, L, M, N constitute the membrane sector of the complex.

Its subcellular location is the cell inner membrane. It carries out the reaction a quinone + NADH + 5 H(+)(in) = a quinol + NAD(+) + 4 H(+)(out). Its function is as follows. NDH-1 shuttles electrons from NADH, via FMN and iron-sulfur (Fe-S) centers, to quinones in the respiratory chain. The immediate electron acceptor for the enzyme in this species is believed to be ubiquinone. Couples the redox reaction to proton translocation (for every two electrons transferred, four hydrogen ions are translocated across the cytoplasmic membrane), and thus conserves the redox energy in a proton gradient. This subunit may bind ubiquinone. The chain is NADH-quinone oxidoreductase subunit H from Yersinia enterocolitica serotype O:8 / biotype 1B (strain NCTC 13174 / 8081).